A 296-amino-acid polypeptide reads, in one-letter code: ATP phosphoribosyltransferase (296 aa).

The protein belongs to the ATP phosphoribosyltransferase family. Long subfamily. It depends on Mg(2+) as a cofactor.

Its subcellular location is the cytoplasm. The enzyme catalyses 1-(5-phospho-beta-D-ribosyl)-ATP + diphosphate = 5-phospho-alpha-D-ribose 1-diphosphate + ATP. Its pathway is amino-acid biosynthesis; L-histidine biosynthesis; L-histidine from 5-phospho-alpha-D-ribose 1-diphosphate: step 1/9. Feedback inhibited by histidine. Its function is as follows. Catalyzes the condensation of ATP and 5-phosphoribose 1-diphosphate to form N'-(5'-phosphoribosyl)-ATP (PR-ATP). Has a crucial role in the pathway because the rate of histidine biosynthesis seems to be controlled primarily by regulation of HisG enzymatic activity. This Halorubrum lacusprofundi (strain ATCC 49239 / DSM 5036 / JCM 8891 / ACAM 34) protein is ATP phosphoribosyltransferase.